The primary structure comprises 1368 residues: DNA-directed RNA polymerase subunit beta (1368 aa).

Belongs to the RNA polymerase beta chain family. The RNAP catalytic core consists of 2 alpha, 1 beta, 1 beta' and 1 omega subunit. When a sigma factor is associated with the core the holoenzyme is formed, which can initiate transcription.

The catalysed reaction is RNA(n) + a ribonucleoside 5'-triphosphate = RNA(n+1) + diphosphate. DNA-dependent RNA polymerase catalyzes the transcription of DNA into RNA using the four ribonucleoside triphosphates as substrates. This chain is DNA-directed RNA polymerase subunit beta, found in Burkholderia multivorans (strain ATCC 17616 / 249).